A 286-amino-acid chain; its full sequence is ATP synthase gamma chain (286 aa).

Belongs to the ATPase gamma chain family. F-type ATPases have 2 components, CF(1) - the catalytic core - and CF(0) - the membrane proton channel. CF(1) has five subunits: alpha(3), beta(3), gamma(1), delta(1), epsilon(1). CF(0) has three main subunits: a, b and c.

The protein localises to the cell membrane. Produces ATP from ADP in the presence of a proton gradient across the membrane. The gamma chain is believed to be important in regulating ATPase activity and the flow of protons through the CF(0) complex. The polypeptide is ATP synthase gamma chain (Mycoplasma mobile (strain ATCC 43663 / 163K / NCTC 11711) (Mesomycoplasma mobile)).